The sequence spans 104 residues: Large ribosomal subunit protein bL21 (104 aa).

The protein belongs to the bacterial ribosomal protein bL21 family. As to quaternary structure, part of the 50S ribosomal subunit. Contacts protein L20.

In terms of biological role, this protein binds to 23S rRNA in the presence of protein L20. The chain is Large ribosomal subunit protein bL21 from Francisella philomiragia subsp. philomiragia (strain ATCC 25017 / CCUG 19701 / FSC 153 / O#319-036).